A 424-amino-acid polypeptide reads, in one-letter code: 5,5'-dehydrodivanillate O-demethylase oxygenase subunit (424 aa).

Residues 27 to 135 (WHPIGGESEF…VRALGGLLWA (109 aa)) enclose the Rieske domain. [2Fe-2S] cluster-binding residues include Cys-68, His-70, Cys-87, and His-90. Fe cation contacts are provided by His-181, His-186, and Asp-306.

This sequence belongs to the bacterial ring-hydroxylating dioxygenase alpha subunit family. In terms of assembly, homotrimer. The three-component monooxygenase is composed of an oxygenase (LigXa), a ferredoxin (LigXc) and a ferredoxin reductase (LigXd). It depends on [2Fe-2S] cluster as a cofactor. Fe cation is required as a cofactor.

It carries out the reaction 5,5'-dehydrodivanillate + NADH + O2 + H(+) = 2,2',3-trihydroxy-3'-methoxy-5,5'-dicarboxybiphenyl + formaldehyde + NAD(+) + H2O. Involved in the catabolism of 5,5'-dehydrodivanillate (DDVA), an intermediate in the biodegradation of lignin. Part of a three-component monooxygenase that catalyzes the O-demethylation of DDVA, leading to the formation of 2,2',3-trihydroxy-3'-methoxy-5,5'-dicarboxybiphenyl (OH-DDVA). In Sphingobium sp. (strain NBRC 103272 / SYK-6), this protein is 5,5'-dehydrodivanillate O-demethylase oxygenase subunit.